Here is a 537-residue protein sequence, read N- to C-terminus: Tyrosine-protein kinase Fyn (537 aa).

A lipid anchor (N-myristoyl glycine) is attached at Gly2. 2 S-palmitoyl cysteine lipidation sites follow: Cys3 and Cys6. Thr12 is subject to Phosphothreonine; by PKC. Residues Ser21 and Ser26 each carry the phosphoserine modification. An SH3 domain is found at 82-143 (TGVTLFVALY…PSNYVAPVDS (62 aa)). The region spanning 149-246 (WYFGKLGRKD…GLCCRLVVPC (98 aa)) is the SH2 domain. Tyr185 is modified (phosphotyrosine). Residues 271 to 524 (LQLIKRLGNG…YLQGFLEDYF (254 aa)) form the Protein kinase domain. Residues 277-285 (LGNGQFGEV) and Lys299 contribute to the ATP site. Asp390 functions as the Proton acceptor in the catalytic mechanism. Position 420 is a phosphotyrosine; by autocatalysis (Tyr420). Tyr531 carries the phosphotyrosine; by CSK modification.

The protein belongs to the protein kinase superfamily. Tyr protein kinase family. SRC subfamily. In terms of assembly, interacts (via its SH3 domain) with PIK3R1 and PRMT8. Interacts with FYB1, PAG1, and SH2D1A. Interacts with CD79A (tyrosine-phosphorylated form); the interaction increases FYN activity. Interacts (via SH2 domain) with CSF1R (tyrosine phosphorylated). Interacts with TOM1L1 (phosphorylated form). Interacts with KDR (tyrosine phosphorylated). Interacts (via SH3 domain) with KLHL2 (via N-terminus). Interacts with SH2D1A and SLAMF1. Interacts with ITCH; the interaction phosphorylates ITCH and negatively regulates its activity. Interacts with FASLG. Interacts with RUNX3. Interacts with KIT. Interacts with EPHA8; possible downstream effector of EPHA8 in regulation of cell adhesion. Interacts with PTK2/FAK1; this interaction leads to PTK2/FAK1 phosphorylation and activation. Interacts with CAV1; this interaction couples integrins to the Ras-ERK pathway. Interacts with UNC119. Interacts (via SH2 domain) with PTPRH (phosphorylated form). Interacts with PTPRO (phosphorylated form). Interacts with PTPRB (phosphorylated form). Interacts with FYB2. Interacts with DSCAM. Interacts with SKAP1 and FYB1; this interaction promotes the phosphorylation of CLNK. Interacts with NEDD9; in the presence of PTK2. The cofactor is Mn(2+). In terms of processing, autophosphorylated at Tyr-420. Phosphorylation on the C-terminal tail at Tyr-531 by CSK maintains the enzyme in an inactive state. PTPRC/CD45 dephosphorylates Tyr-531 leading to activation. Ultraviolet B (UVB) strongly increase phosphorylation at Thr-12 and kinase activity, and promotes translocation from the cytoplasm to the nucleus. Dephosphorylation at Tyr-420 by PTPN2 negatively regulates T-cell receptor signaling. Phosphorylated at tyrosine residues, which can be enhanced by NTN1. Palmitoylated. Palmitoylation at Cys-3 and Cys-6, probably by ZDHHC21, regulates subcellular location.

It is found in the cytoplasm. The protein resides in the nucleus. Its subcellular location is the cell membrane. The protein localises to the perikaryon. It carries out the reaction L-tyrosyl-[protein] + ATP = O-phospho-L-tyrosyl-[protein] + ADP + H(+). Inhibited by phosphorylation of Tyr-531 by leukocyte common antigen and activated by dephosphorylation of this site. Its function is as follows. Non-receptor tyrosine-protein kinase that plays a role in many biological processes including regulation of cell growth and survival, cell adhesion, integrin-mediated signaling, cytoskeletal remodeling, cell motility, immune response and axon guidance. Inactive FYN is phosphorylated on its C-terminal tail within the catalytic domain. Following activation by PKA, the protein subsequently associates with PTK2/FAK1, allowing PTK2/FAK1 phosphorylation, activation and targeting to focal adhesions. Involved in the regulation of cell adhesion and motility through phosphorylation of CTNNB1 (beta-catenin) and CTNND1 (delta-catenin). Regulates cytoskeletal remodeling by phosphorylating several proteins including the actin regulator WAS and the microtubule-associated proteins MAP2 and MAPT. Promotes cell survival by phosphorylating AGAP2/PIKE-A and preventing its apoptotic cleavage. Participates in signal transduction pathways that regulate the integrity of the glomerular slit diaphragm (an essential part of the glomerular filter of the kidney) by phosphorylating several slit diaphragm components including NPHS1, KIRREL1 and TRPC6. Plays a role in neural processes by phosphorylating DPYSL2, a multifunctional adapter protein within the central nervous system, ARHGAP32, a regulator for Rho family GTPases implicated in various neural functions, and SNCA, a small pre-synaptic protein. Involved in reelin signaling by mediating phosphorylation of DAB1 following reelin (RELN)-binding to its receptor. Participates in the downstream signaling pathways that lead to T-cell differentiation and proliferation following T-cell receptor (TCR) stimulation. Phosphorylates PTK2B/PYK2 in response to T-cell receptor activation. Also participates in negative feedback regulation of TCR signaling through phosphorylation of PAG1, thereby promoting interaction between PAG1 and CSK and recruitment of CSK to lipid rafts. CSK maintains LCK and FYN in an inactive form. Promotes CD28-induced phosphorylation of VAV1. In mast cells, phosphorylates CLNK after activation of immunoglobulin epsilon receptor signaling. Can also promote CD244-mediated NK cell activation. This is Tyrosine-protein kinase Fyn from Sus scrofa (Pig).